Here is a 376-residue protein sequence, read N- to C-terminus: uncharacterized protein (376 aa).

A Peptidase M14 domain is found at 82–372 (KIYDDSAVEK…ATSGILWRAL (291 aa)). The Zn(2+) site is built by histidine 138, glutamate 141, and histidine 283. The active-site Proton donor/acceptor is glutamate 344.

It belongs to the peptidase M14 family. Zn(2+) is required as a cofactor.

This is an uncharacterized protein from Bacillus subtilis (strain 168).